Reading from the N-terminus, the 525-residue chain is Sterol O-acyltransferase 2 (525 aa).

Disordered stretches follow at residues 1-34 (MQPK…THGT) and 77-97 (QDRP…ELHP). The Cytoplasmic segment spans residues 1–119 (MQPKVPQLRR…IDELMEVQHF (119 aa)). The segment covering 9 to 23 (RRREGLGEEQEKGAR) has biased composition (basic and acidic residues). Histidine 118 lines the cholesterol pocket. The helical transmembrane segment at 120–141 (RTIYHMFIAGLCVLIISTLAID) threads the bilayer. The Lumenal segment spans residues 142–161 (FIDEGRLMLEFDLLLFSFGQ). Residues 162–187 (LPLALMTWVPMFLSTLLVPYQTLWLW) traverse the membrane as a helical segment. Topologically, residues 188–199 (ARPRAGGAWMLG) are cytoplasmic. Residues 200–223 (ASLGCVLLAAHAVVLCVLPVHVSV) form a helical membrane-spanning segment. The Lumenal portion of the chain corresponds to 224-231 (RHELPPAS). Residues 232–255 (RCVLVFEQVRLLMKSYSFLRETVP) traverse the membrane as a helical segment. Topologically, residues 256-296 (GIFCVRGGKGISPPSFSSYLYFLFCPTLIYRETYPRTPSIR) are cytoplasmic. Cysteine 280 is modified (cysteine sulfenic acid (-SOH); alternate). A Glycyl cysteine thioester (Cys-Gly) (interchain with G-Cter in ubiquitin); alternate cross-link involves residue cysteine 280. Residues 297–329 (WNYVAKNFAQVLGCLLYACFILGRLCVPVFANM) traverse the membrane as a helical segment. Residues 330 to 346 (SREPFSTRALLLSILHA) lie on the Lumenal side of the membrane. The helical transmembrane segment at 347–372 (TGPGIFMLLLIFFAFLHCWLNAFAEM) threads the bilayer. Over 373 to 420 (LRFGDRMFYRDWWNSTSFSNYYRTWNVVVHDWLYSYVYQDGLWLLGRR) the chain is Cytoplasmic. Residues 380 to 386 (FYRDWWN) carry the FYXDWWN motif motif. Asparagine 392, arginine 395, asparagine 398, histidine 402, tyrosine 410, and serine 433 together coordinate an acyl-CoA. The helical transmembrane segment at 421 to 445 (ARGVAMLGVFLVSAVVHEYIFCFVL) threads the bilayer. The active site involves histidine 437. The Lumenal segment spans residues 446 to 451 (GFFYPV). A helical membrane pass occupies residues 452–467 (MLMLFLVFGGLLNFTM). Topologically, residues 468–473 (NDRHTG) are cytoplasmic. Residues 474–505 (PAWNILMWTFLFMGQGIQVSLYCQEWYARRHC) traverse the membrane as a helical segment. Over 506–525 (PLPQTTFWGMVTPRSWSCHP) the chain is Lumenal.

This sequence belongs to the membrane-bound acyltransferase family. Sterol o-acyltransferase subfamily. As to quaternary structure, may form homo- or heterodimers. Interacts with INSIG1; the interaction is direct and promotes association with AMFR/gp78. Post-translationally, polyubiquitinated by AMFR/gp78 at Cys-280, leading to its degradation when the lipid levels are low. Association with AMFR/gp78 is mediated via interaction with INSIG1. High concentration of cholesterol and fatty acid results in Cys-280 oxidation, preventing ubiquitination at the same site, resulting in protein stabilization. In terms of processing, oxidized at Cys-280: high concentration of cholesterol and fatty acid induce reactive oxygen species, which oxidizes Cys-280, preventing ubiquitination at the same site, and resulting in protein stabilization.

The protein resides in the endoplasmic reticulum membrane. It carries out the reaction a sterol + a long-chain fatty acyl-CoA = a long-chain 3-hydroxysterol ester + CoA. The enzyme catalyses cholesterol + an acyl-CoA = a cholesterol ester + CoA. The catalysed reaction is cholesterol + (9Z)-octadecenoyl-CoA = cholesteryl (9Z-octadecenoate) + CoA. It catalyses the reaction (5Z,8Z,11Z,14Z,17Z)-eicosapentaenoyl-CoA + cholesterol = (5Z,8Z,11Z,14Z,17Z-eicosapentaenoyl)-cholesterol + CoA. It carries out the reaction (9Z,12Z,15Z)-octadecatrienoyl-CoA + cholesterol = (9Z,12Z,15Z-octadecatrienoyl)-cholesterol + CoA. The enzyme catalyses (5Z,8Z,11Z,14Z)-eicosatetraenoyl-CoA + cholesterol = cholesteryl (5Z,8Z,11Z,14Z)-eicosatetraenoate + CoA. Functionally, catalyzes the formation of fatty acid-cholesterol esters, which are less soluble in membranes than cholesterol. Plays a role in lipoprotein assembly and dietary cholesterol absorption. Utilizes oleoyl-CoA ((9Z)-octadecenoyl-CoA) and linolenoyl-CoA ((9Z,12Z,15Z)-octadecatrienoyl-CoA) as substrates. May provide cholesteryl esters for lipoprotein secretion from hepatocytes and intestinal mucosa. This Mus musculus (Mouse) protein is Sterol O-acyltransferase 2.